The chain runs to 521 residues: Probable ATP-dependent RNA helicase Dbp45A (521 aa).

A Q motif motif is present at residues 7–35 (NPFQILGLRPWLVKQLTKLGLKGATPIQQ). Residues 38–209 (IPAILAGQDC…IFPIASDCFE (172 aa)) enclose the Helicase ATP-binding domain. Position 51-58 (51-58 (AKTGSGKT)) interacts with ATP. Residues 157-160 (DEAD) carry the DEAD box motif. A Helicase C-terminal domain is found at 237-386 (VLIEALRKYR…EHPIDQRMVE (150 aa)). The segment at 448–521 (KRKLQHAEPA…GRADVKKDKA (74 aa)) is disordered. Composition is skewed to basic and acidic residues over residues 460–482 (EEGK…FEKK) and 502–521 (LNKE…KDKA).

It belongs to the DEAD box helicase family. DDX49/DBP8 subfamily.

It catalyses the reaction ATP + H2O = ADP + phosphate + H(+). Probable ATP-binding RNA helicase. The polypeptide is Probable ATP-dependent RNA helicase Dbp45A (Dbp45A) (Drosophila melanogaster (Fruit fly)).